Reading from the N-terminus, the 122-residue chain is Small ribosomal subunit protein uS13 (122 aa).

The segment at 97–122 is disordered; the sequence is PVRGQRTHTNARTRKGPAKAIAGKKK.

It belongs to the universal ribosomal protein uS13 family. In terms of assembly, part of the 30S ribosomal subunit. Forms a loose heterodimer with protein S19. Forms two bridges to the 50S subunit in the 70S ribosome.

Functionally, located at the top of the head of the 30S subunit, it contacts several helices of the 16S rRNA. In the 70S ribosome it contacts the 23S rRNA (bridge B1a) and protein L5 of the 50S subunit (bridge B1b), connecting the 2 subunits; these bridges are implicated in subunit movement. Contacts the tRNAs in the A and P-sites. The sequence is that of Small ribosomal subunit protein uS13 from Bartonella henselae (strain ATCC 49882 / DSM 28221 / CCUG 30454 / Houston 1) (Rochalimaea henselae).